A 421-amino-acid polypeptide reads, in one-letter code: Anthranilate synthase component 1 (421 aa).

L-tryptophan-binding positions include serine 31 and 207 to 209 (PYM). 242 to 243 (GT) is a binding site for chorismate. Glutamate 269 is a binding site for Mg(2+). Residues tyrosine 357, arginine 377, 391–393 (GAG), and glycine 393 each bind chorismate. Glutamate 406 lines the Mg(2+) pocket.

This sequence belongs to the anthranilate synthase component I family. As to quaternary structure, heterotetramer consisting of two non-identical subunits: a beta subunit (TrpG) and a large alpha subunit (TrpE). It depends on Mg(2+) as a cofactor.

It catalyses the reaction chorismate + L-glutamine = anthranilate + pyruvate + L-glutamate + H(+). It functions in the pathway amino-acid biosynthesis; L-tryptophan biosynthesis; L-tryptophan from chorismate: step 1/5. Its activity is regulated as follows. Cooperatively feedback inhibited by tryptophan. Functionally, part of a heterotetrameric complex that catalyzes the two-step biosynthesis of anthranilate, an intermediate in the biosynthesis of L-tryptophan. In the first step, the glutamine-binding beta subunit (TrpG) of anthranilate synthase (AS) provides the glutamine amidotransferase activity which generates ammonia as a substrate that, along with chorismate, is used in the second step, catalyzed by the large alpha subunit of AS (TrpE) to produce anthranilate. In the absence of TrpG, TrpE can synthesize anthranilate directly from chorismate and high concentrations of ammonia. The sequence is that of Anthranilate synthase component 1 (trpE) from Saccharolobus solfataricus (strain ATCC 35092 / DSM 1617 / JCM 11322 / P2) (Sulfolobus solfataricus).